A 149-amino-acid chain; its full sequence is Urease accessory protein UreE (149 aa).

Belongs to the UreE family.

It is found in the cytoplasm. In terms of biological role, involved in urease metallocenter assembly. Binds nickel. Probably functions as a nickel donor during metallocenter assembly. The chain is Urease accessory protein UreE from Prochlorococcus marinus (strain MIT 9301).